Here is a 297-residue protein sequence, read N- to C-terminus: Putative thiosulfate sulfurtransferase SseA (297 aa).

2 consecutive Rhodanese domains span residues Gly-31–Leu-138 and Ile-168–Val-286. Cys-245 acts as the Cysteine persulfide intermediate in catalysis. Arg-250 is a substrate binding site.

It carries out the reaction thiosulfate + hydrogen cyanide = thiocyanate + sulfite + 2 H(+). The chain is Putative thiosulfate sulfurtransferase SseA (sseA) from Mycobacterium tuberculosis (strain CDC 1551 / Oshkosh).